A 181-amino-acid polypeptide reads, in one-letter code: FMN reductase (NADH) RutF (181 aa).

Belongs to the non-flavoprotein flavin reductase family. RutF subfamily.

The catalysed reaction is FMNH2 + NAD(+) = FMN + NADH + 2 H(+). Functionally, catalyzes the reduction of FMN to FMNH2 which is used to reduce pyrimidine by RutA via the Rut pathway. The polypeptide is FMN reductase (NADH) RutF (Ancylobacter novellus (strain ATCC 8093 / DSM 506 / JCM 20403 / CCM 1077 / IAM 12100 / NBRC 12443 / NCIMB 10456) (Starkeya novella)).